The chain runs to 96 residues: Progonadoliberin-1 (96 aa).

Residues 1 to 26 (MHRKMAVKTLSVWLLLVGTLVPQHCC) form the signal peptide. A Pyrrolidone carboxylic acid modification is found at glutamine 27. Glycine 36 carries the glycine amide modification.

The protein belongs to the GnRH family. In terms of tissue distribution, preoptic area of the brain.

It localises to the secreted. Functionally, stimulates the secretion of gonadotropins. The chain is Progonadoliberin-1 (gnrh1) from Verasper moseri (Barfin flounder).